The chain runs to 391 residues: MPGNSFGKLFRVTTFGESHGPAVGVVIDGVPAGLPLTVEDIKFELEFRRPGRLYVSGRREKDEPEILSGIFNNRTTGSPIAVIVRNTDVVSSFYEEIRYKPRPGHADLPFIMKYGYENWDYRGGGRASARETVGRVIAGAVAKKLLMLADTWIAGHLRSLGPEELNEEVTFEEVLCSKYSPVRASKKVLEEKYEALIKKATQEGDSYGGIAEVITKNPPIGLGEPVFDKMKAELAKAIMSIPAVTGFEYGLGFMVSKMKGSEANDEIIRKDNKIGWKYNYAGGILGGLTNGEDLIVRCAFKPTSSIRKPQKTIDLRNLEETYISVIGRHDPAVAIRGVTVVESMVALTLVDHAMRAGVIPLVKLTEEQGNIVQQRWERYVRSCKPMEESQL.

An NADP(+)-binding site is contributed by R48. FMN is bound by residues 126–128 (RAS), G286, 301–305 (KPTSS), and R328.

The protein belongs to the chorismate synthase family. FMNH2 is required as a cofactor.

The catalysed reaction is 5-O-(1-carboxyvinyl)-3-phosphoshikimate = chorismate + phosphate. It participates in metabolic intermediate biosynthesis; chorismate biosynthesis; chorismate from D-erythrose 4-phosphate and phosphoenolpyruvate: step 7/7. Its function is as follows. Catalyzes the anti-1,4-elimination of the C-3 phosphate and the C-6 proR hydrogen from 5-enolpyruvylshikimate-3-phosphate (EPSP) to yield chorismate, which is the branch point compound that serves as the starting substrate for the three terminal pathways of aromatic amino acid biosynthesis. This reaction introduces a second double bond into the aromatic ring system. The sequence is that of Chorismate synthase from Saccharolobus islandicus (strain M.16.27) (Sulfolobus islandicus).